A 932-amino-acid chain; its full sequence is MAQLTPMMQQYVETKEQYKDCILFYRLGDFYEMFFEDALVASKELEITLTGKNCGQEERAPMCGIPYHAAEGYISKLIGKGYKVAICEQVEDPKLAKGIVKREVIRIVTPGTNLNTQTLDETRNNYLMGIIFTDEHCGISTVDITTGDYYVTEVENNRKILDEIYKYTPSEIVCNPEFFHCGLDVEDLKNRYQIAVSTFEDWYYDSEQSVKTLKEHFKVGSLDGLGLKDYSVGVNAAGAILKYLYNTQKNSLSHLTHITPYVTSRYMVIDSSSRRNLELTETLREKQKRGSLLWVLDKTKTAMGARMLRSFVEQPLITMDEISARYDAISELNDNVITREEIREYLNYIYDLERLMGKISYKSANPRDLIAFASSLSMLPHIKYLLSTCESALLKQIHEEMDALDDLQNLIDRSIAEEPPIGIKEGGIIKEGFHTEVDTLRKAKTEGKVWLAELEAKEKEQTGIKNLKVKYNRVFGYYLEVTNSYANLVPENWIRKQTLSNAERYTTPELKELEDKILNAEDRLFSLEYDLFAEIRDQIAEEVKRIQKTAKAVANIDAFASLAYVAERNQFIRPELNTNGTIDIKEGRHPVVEQMIPNDMFVSNDTYLDNAEKRISIITGPNMAGKSTYMRQTALIVLMAQVGSFVPASYANIGIVDRIFTRVGASDDLASGQSTFMVEMTEVANILRNATKNSLLILDEIGRGTSTFDGLSIAWAVIEHISNTSMLGAKTLFATHYHELTELEGKISGVNNYCIAVKEQGEDIVFLRKIIGGGADKSYGIQVAKLAGVPNSVLVRAREIVDQLSENDIAEKARHIVSAAEISNLTPETEGEVNTNKMYTTKVNATEVITTEVNTAKMNTTEMVSNQESVEQPRNFGQMSFFITEDTKQKKASSEFSEKLVQEINQFDLANMTPVEALLKLDKLQKKIRSHT.

620 to 627 contributes to the ATP binding site; the sequence is GPNMAGKS.

It belongs to the DNA mismatch repair MutS family.

In terms of biological role, this protein is involved in the repair of mismatches in DNA. It is possible that it carries out the mismatch recognition step. This protein has a weak ATPase activity. This chain is DNA mismatch repair protein MutS, found in Lachnoclostridium phytofermentans (strain ATCC 700394 / DSM 18823 / ISDg) (Clostridium phytofermentans).